Here is a 502-residue protein sequence, read N- to C-terminus: Premnaspirodiene oxygenase (502 aa).

Residues 2–22 traverse the membrane as a helical segment; sequence QFFSLVSIFLFLSFLFLLRKW. Position 440 (Cys440) interacts with heme.

This sequence belongs to the cytochrome P450 family. It depends on heme as a cofactor.

It localises to the membrane. It catalyses the reaction (-)-vetispiradiene + 2 reduced [NADPH--hemoprotein reductase] + 2 O2 = solavetivone + 2 oxidized [NADPH--hemoprotein reductase] + 3 H2O + 2 H(+). Involved in the biosynthesis of solavetivone, a potent antifungal phytoalexin. Catalyzes the successive and independent hydroxylations of premnaspirodiene and solavetivol. The first hydroxylation step is 3-fold more efficient than the second hydroxylation reaction. In Hyoscyamus muticus (Egyptian henbane), this protein is Premnaspirodiene oxygenase (CYP71D55).